Reading from the N-terminus, the 406-residue chain is Tryptophan synthase beta chain (406 aa).

K99 bears the N6-(pyridoxal phosphate)lysine mark.

It belongs to the TrpB family. As to quaternary structure, tetramer of two alpha and two beta chains. Requires pyridoxal 5'-phosphate as cofactor.

The enzyme catalyses (1S,2R)-1-C-(indol-3-yl)glycerol 3-phosphate + L-serine = D-glyceraldehyde 3-phosphate + L-tryptophan + H2O. The protein operates within amino-acid biosynthesis; L-tryptophan biosynthesis; L-tryptophan from chorismate: step 5/5. In terms of biological role, the beta subunit is responsible for the synthesis of L-tryptophan from indole and L-serine. The protein is Tryptophan synthase beta chain of Methylobacterium sp. (strain 4-46).